The sequence spans 296 residues: GTPase Era (296 aa).

The Era-type G domain maps to 3-170 (KSGFVTIVGR…KELMFKYIPE (168 aa)). Residues 11–18 (GRPNVGKS) are G1. 11–18 (GRPNVGKS) serves as a coordination point for GTP. A G2 region spans residues 37–41 (QTTRN). The segment at 58–61 (DTPG) is G3. GTP is bound by residues 58–62 (DTPGI) and 120–123 (NKID). Residues 120 to 123 (NKID) form a G4 region. Residues 149 to 151 (ISA) form a G5 region. Residues 201-278 (LSEEVPHGIA…YIRLWVKVKE (78 aa)) form the KH type-2 domain.

It belongs to the TRAFAC class TrmE-Era-EngA-EngB-Septin-like GTPase superfamily. Era GTPase family. As to quaternary structure, monomer.

It is found in the cytoplasm. Its subcellular location is the cell membrane. Its function is as follows. An essential GTPase that binds both GDP and GTP, with rapid nucleotide exchange. Plays a role in 16S rRNA processing and 30S ribosomal subunit biogenesis and possibly also in cell cycle regulation and energy metabolism. This chain is GTPase Era, found in Clostridium botulinum (strain Kyoto / Type A2).